Consider the following 292-residue polypeptide: Tumor necrosis factor alpha-induced protein 8-like protein 3 (292 aa).

Residues 81-107 (DAQPAARSMDSDSGEQSEGEPVTAAGP) form a disordered region. Residues 109-292 (VFSSKSLALQ…INKLLDEKVL (184 aa)) are binding to phosphoinositides.

This sequence belongs to the TNFAIP8 family. Widely expressed (at protein level). Highly expressed in most carcinoma cell lines.

It is found in the cytoplasm. Its subcellular location is the cell membrane. Acts as a lipid transfer protein. Preferentially captures and shuttles two lipid second messengers, i.e., phosphatidylinositol 4,5- bisphosphate and phosphatidylinositol 3,4,5-trisphosphate and increases their levels in the plasma membrane. Additionally, may also function as a lipid-presenting protein to enhance the activity of the PI3K-AKT and MEK-ERK pathways. May act as a regulator of tumorigenesis through its activation of phospholipid signaling. The sequence is that of Tumor necrosis factor alpha-induced protein 8-like protein 3 (TNFAIP8L3) from Homo sapiens (Human).